The sequence spans 1577 residues: Probable serine/threonine-protein kinase gdt9 (1577 aa).

The first 16 residues, 1 to 16 (MKTFLLIFLLICVCKG), serve as a signal peptide directing secretion. Topologically, residues 17–966 (ITNITTPSIY…NNEDNHKKLV (950 aa)) are extracellular. Residues 967 to 987 (IALSVSIPVAALLVILCFGIF) form a helical membrane-spanning segment. Topologically, residues 988 to 1577 (ICYNNNKKNK…SLVKIFKRFN (590 aa)) are cytoplasmic. A compositionally biased stretch (basic and acidic residues) spans 998 to 1014 (NETKGKDIETNTDKKDD). Disordered stretches follow at residues 998–1019 (NETK…NENE) and 1050–1128 (TLPP…FPTI). Positions 1050-1082 (TLPPQSTISIDTSPSSENTTFTESLTPKKSATV) are enriched in polar residues. The segment covering 1091-1115 (NSTNESTVSNSSSENNSDNNNNNNN) has biased composition (low complexity). A Protein kinase domain is found at 1290-1573 (LDFDEICGQG…EIVFSLVKIF (284 aa)). ATP is bound by residues 1296 to 1304 (CGQGTYGMV) and Lys1317. Asp1436 (proton acceptor) is an active-site residue.

In the N-terminal section; belongs to the GDT family. This sequence in the C-terminal section; belongs to the protein kinase superfamily. TKL Ser/Thr protein kinase family.

It localises to the membrane. It carries out the reaction L-seryl-[protein] + ATP = O-phospho-L-seryl-[protein] + ADP + H(+). The catalysed reaction is L-threonyl-[protein] + ATP = O-phospho-L-threonyl-[protein] + ADP + H(+). In Dictyostelium discoideum (Social amoeba), this protein is Probable serine/threonine-protein kinase gdt9 (gdt9).